The chain runs to 380 residues: UDP-3-O-acylglucosamine N-acyltransferase (380 aa).

The active-site Proton acceptor is the His-263.

Belongs to the transferase hexapeptide repeat family. LpxD subfamily. Homotrimer.

It catalyses the reaction a UDP-3-O-[(3R)-3-hydroxyacyl]-alpha-D-glucosamine + a (3R)-hydroxyacyl-[ACP] = a UDP-2-N,3-O-bis[(3R)-3-hydroxyacyl]-alpha-D-glucosamine + holo-[ACP] + H(+). Its pathway is bacterial outer membrane biogenesis; LPS lipid A biosynthesis. Functionally, catalyzes the N-acylation of UDP-3-O-acylglucosamine using 3-hydroxyacyl-ACP as the acyl donor. Is involved in the biosynthesis of lipid A, a phosphorylated glycolipid that anchors the lipopolysaccharide to the outer membrane of the cell. The chain is UDP-3-O-acylglucosamine N-acyltransferase from Rhodopirellula baltica (strain DSM 10527 / NCIMB 13988 / SH1).